The chain runs to 443 residues: Nuclear pore complex-interacting protein family member B15 (443 aa).

The first 18 residues, 1–18, serve as a signal peptide directing secretion; the sequence is MRLRFWLLIWLLLGFISH. Residue Asn-111 is glycosylated (N-linked (GlcNAc...) asparagine). 2 disordered regions span residues 242–262 and 330–413; these read RMGR…NSLS and SPLP…TRHC. The span at 252–262 shows a compositional bias: polar residues; the sequence is QQHSITDNSLS. The span at 351 to 393 shows a compositional bias: basic and acidic residues; sequence EAEKPPKPKRWRVDEVEQSPKPKRRRADEVEQSPKPKRQREAE. Over residues 399-412 the composition is skewed to basic residues; it reads KPKRRRLSKLRTRH.

It belongs to the NPIP family.

The protein resides in the secreted. The protein is Nuclear pore complex-interacting protein family member B15 (NPIPB15) of Homo sapiens (Human).